Reading from the N-terminus, the 1255-residue chain is MELAALCRWGLLLALLPPGAASTQVCTGTDMKLRLPASPETHLDMLRHLYQGCQVVQGNLELTYLPTNASLSFLQDIQEVQGYVLIAHNQVRQVPLQRLRIVRGTQLFEDNYALAVLDNGDPLNNTTPVTGASPGGLRELQLRSLTEILKGGVLIQRNPQLCYQDTILWKDIFHKNNQLALTLIDTNRSRACHPCSPMCKGSRCWGESSEDCQSLTRTVCAGGCARCKGPLPTDCCHEQCAAGCTGPKHSDCLACLHFNHSGICELHCPALVTYNTDTFESMPNPEGRYTFGASCVTACPYNYLSTDVGSCTLVCPLHNQEVTAEDGTQRCEKCSKPCARVCYGLGMEHLREVRAVTSANIQEFAGCKKIFGSLAFLPESFDGDPASNTAPLQPEQLQVFETLEEITGYLYISAWPDSLPDLSVFQNLQVIRGRILHNGAYSLTLQGLGISWLGLRSLRELGSGLALIHHNTHLCFVHTVPWDQLFRNPHQALLHTANRPEDECVGEGLACHQLCARGHCWGPGPTQCVNCSQFLRGQECVEECRVLQGLPREYVNARHCLPCHPECQPQNGSVTCFGPEADQCVACAHYKDPPFCVARCPSGVKPDLSYMPIWKFPDEEGACQPCPINCTHSCVDLDDKGCPAEQRASPLTSIISAVVGILLVVVLGVVFGILIKRRQQKIRKYTMRRLLQETELVEPLTPSGAMPNQAQMRILKETELRKVKVLGSGAFGTVYKGIWIPDGENVKIPVAIKVLRENTSPKANKEILDEAYVMAGVGSPYVSRLLGICLTSTVQLVTQLMPYGCLLDHVRENRGRLGSQDLLNWCMQIAKGMSYLEDVRLVHRDLAARNVLVKSPNHVKITDFGLARLLDIDETEYHADGGKVPIKWMALESILRRRFTHQSDVWSYGVTVWELMTFGAKPYDGIPAREIPDLLEKGERLPQPPICTIDVYMIMVKCWMIDSECRPRFRELVSEFSRMARDPQRFVVIQNEDLGPASPLDSTFYRSLLEDDDMGDLVDAEEYLVPQQGFFCPDPAPGAGGMVHHRHRSSSTRSGGGDLTLGLEPSEEEAPRSPLAPSEGAGSDVFDGDLGMGAAKGLQSLPTHDPSPLQRYSEDPTVPLPSETDGYVAPLTCSPQPEYVNQPDVRPQPPSPREGPLPAARPAGATLERPKTLSPGKNGVVKDVFAFGGAVENPEYLTPQGGAAPQPHPPPAFSPAFDNLYYWDQDPPERGAPPSTFKGTPTAENPEYLGLDVPV.

Residues 1–22 (MELAALCRWGLLLALLPPGAAS) form the signal peptide. The Extracellular segment spans residues 23–652 (TQVCTGTDMK…PAEQRASPLT (630 aa)). Cys26 and Cys53 are joined by a disulfide. N-linked (GlcNAc...) asparagine glycosylation is found at Asn68 and Asn124. Intrachain disulfides connect Cys162-Cys192, Cys195-Cys204, Cys199-Cys212, Cys220-Cys227, Cys224-Cys235, Cys236-Cys244, Cys240-Cys252, Cys255-Cys264, Cys268-Cys295, Cys299-Cys311, Cys315-Cys331, Cys334-Cys338, Cys342-Cys367, Cys475-Cys504, Cys511-Cys520, and Cys515-Cys528. The residue at position 182 (Thr182) is a Phosphothreonine. N-linked (GlcNAc...) asparagine glycosylation occurs at Asn187. Asn259 is a glycosylation site (N-linked (GlcNAc...) asparagine). The N-linked (GlcNAc...) asparagine glycan is linked to Asn530. Intrachain disulfides connect Cys531–Cys540, Cys544–Cys560, Cys563–Cys576, Cys567–Cys584, Cys587–Cys596, Cys600–Cys623, Cys626–Cys634, and Cys630–Cys642. N-linked (GlcNAc...) asparagine glycosylation occurs at Asn571. Asn629 carries N-linked (GlcNAc...) asparagine glycosylation. A helical membrane pass occupies residues 653–675 (SIISAVVGILLVVVLGVVFGILI). The interval 676–689 (KRRQQKIRKYTMRR) is required for interaction with KPNB1 and EEA1. Residues 676-689 (KRRQQKIRKYTMRR) carry the Nuclear localization signal motif. The Cytoplasmic segment spans residues 676-1255 (KRRQQKIRKY…PEYLGLDVPV (580 aa)). The 268-residue stretch at 720–987 (LRKVKVLGSG…RMARDPQRFV (268 aa)) folds into the Protein kinase domain. Residues 726–734 (LGSGAFGTV) and Lys753 each bind ATP. The active-site Proton acceptor is the Asp845. Tyr877 is subject to Phosphotyrosine. 2 disordered regions span residues 1035 to 1179 (PAPG…GKNG) and 1196 to 1255 (YLTP…DVPV). Ser1054, Ser1078, Ser1083, and Ser1107 each carry phosphoserine. 2 positions are modified to phosphotyrosine: Tyr1112 and Tyr1139. Residues 1146 to 1155 (RPQPPSPREG) are compositionally biased toward pro residues. Ser1151 carries the post-translational modification Phosphoserine. At Thr1166 the chain carries Phosphothreonine. The interval 1195–1197 (EYL) is interaction with PIK3C2B. Tyr1196 is subject to Phosphotyrosine. Tyr1248 carries the phosphotyrosine; by autocatalysis modification.

Belongs to the protein kinase superfamily. Tyr protein kinase family. EGF receptor subfamily. As to quaternary structure, homodimer. Heterodimer with EGFR, ERBB3 and ERBB4. Part of a complex with EGFR and either PIK3C2A or PIK3C2B. May interact with PIK3C2B when phosphorylated on Tyr-1196. Interacts with PLXNB1. Interacts (when phosphorylated on Tyr-1248) with MEMO1. Interacts with MUC1; the interaction is enhanced by heregulin (HRG). Interacts (when phosphorylated on Tyr-1139) with GRB7 (via SH2 domain). Interacts (when phosphorylated on Tyr-1248) with ERBIN. Interacts with KPNB1, RANBP2, EEA1, CRM1 and CLTC. Interacts with PTK6. Interacts with RPA194 and ACTB. Interacts with PRKCABP, SRC and MYOC. Interacts (preferentially with the tyrosine phosphorylated form) with CPNE3; this interaction occurs at the cell membrane and is increased in a growth factor heregulin-dependent manner. Interacts with HSP90AA1 and HSP90AB1 in an ATP-dependent manner; the interaction suppresses ERBB2 kinase activity. Interacts with SORL1; this interaction regulates ERBB2 subcellular distribution by promoting its recycling after internalization from endosomes back to the plasma membrane, hence stimulates ERBB2-mediated signaling. Interacts with SH3BGRL. Interacts with ROR1. In terms of processing, autophosphorylated. Autophosphorylation occurs in trans, i.e. one subunit of the dimeric receptor phosphorylates tyrosine residues on the other subunit. Ligand-binding increases phosphorylation on tyrosine residues. Signaling via SEMA4C promotes phosphorylation at Tyr-1248. Dephosphorylated by PTPN12. As to expression, expressed in a variety of tumor tissues including primary breast tumors and tumors from small bowel, esophagus, kidney and mouth.

It is found in the cell membrane. The protein localises to the cell projection. Its subcellular location is the ruffle membrane. It localises to the early endosome. The protein resides in the cytoplasm. It is found in the perinuclear region. The protein localises to the nucleus. It carries out the reaction L-tyrosyl-[protein] + ATP = O-phospho-L-tyrosyl-[protein] + ADP + H(+). With respect to regulation, activated by dimerization. Not activated by EGF, TGF-alpha and amphiregulin. Interaction with PTK6 increases its intrinsic kinase activity. Functionally, protein tyrosine kinase that is part of several cell surface receptor complexes, but that apparently needs a coreceptor for ligand binding. Essential component of a neuregulin-receptor complex, although neuregulins do not interact with it alone. GP30 is a potential ligand for this receptor. Regulates outgrowth and stabilization of peripheral microtubules (MTs). Upon ERBB2 activation, the MEMO1-RHOA-DIAPH1 signaling pathway elicits the phosphorylation and thus the inhibition of GSK3B at cell membrane. This prevents the phosphorylation of APC and CLASP2, allowing its association with the cell membrane. In turn, membrane-bound APC allows the localization of MACF1 to the cell membrane, which is required for microtubule capture and stabilization. In terms of biological role, in the nucleus is involved in transcriptional regulation. Associates with the 5'-TCAAATTC-3' sequence in the PTGS2/COX-2 promoter and activates its transcription. Implicated in transcriptional activation of CDKN1A; the function involves STAT3 and SRC. Involved in the transcription of rRNA genes by RNA Pol I and enhances protein synthesis and cell growth. This Homo sapiens (Human) protein is Receptor tyrosine-protein kinase erbB-2 (ERBB2).